Reading from the N-terminus, the 367-residue chain is Protein RecA (367 aa).

73–80 (GPESSGKT) is an ATP binding site. The interval 345–367 (DEPVAKKASAKESKEAKELKEVE) is disordered.

This sequence belongs to the RecA family.

Its subcellular location is the cytoplasm. In terms of biological role, can catalyze the hydrolysis of ATP in the presence of single-stranded DNA, the ATP-dependent uptake of single-stranded DNA by duplex DNA, and the ATP-dependent hybridization of homologous single-stranded DNAs. It interacts with LexA causing its activation and leading to its autocatalytic cleavage. This chain is Protein RecA, found in Janthinobacterium sp. (strain Marseille) (Minibacterium massiliensis).